A 449-amino-acid chain; its full sequence is Trigger factor (449 aa).

A PPIase FKBP-type domain is found at 173–258; sequence GDRVTLDFVG…LKKVEWAHLP (86 aa).

The protein belongs to the FKBP-type PPIase family. Tig subfamily.

It is found in the cytoplasm. The catalysed reaction is [protein]-peptidylproline (omega=180) = [protein]-peptidylproline (omega=0). In terms of biological role, involved in protein export. Acts as a chaperone by maintaining the newly synthesized protein in an open conformation. Functions as a peptidyl-prolyl cis-trans isomerase. This is Trigger factor from Cupriavidus metallidurans (strain ATCC 43123 / DSM 2839 / NBRC 102507 / CH34) (Ralstonia metallidurans).